The primary structure comprises 398 residues: Acetate kinase (398 aa).

Position 7 (Asn-7) interacts with Mg(2+). Lys-14 provides a ligand contact to ATP. Residue Arg-91 coordinates substrate. Asp-148 functions as the Proton donor/acceptor in the catalytic mechanism. ATP-binding positions include 208-212, 283-285, and 331-335; these read HIGNG, DLR, and GVGEN. Glu-385 is a Mg(2+) binding site.

Belongs to the acetokinase family. As to quaternary structure, homodimer. Requires Mg(2+) as cofactor. Mn(2+) is required as a cofactor.

It localises to the cytoplasm. The enzyme catalyses acetate + ATP = acetyl phosphate + ADP. It participates in metabolic intermediate biosynthesis; acetyl-CoA biosynthesis; acetyl-CoA from acetate: step 1/2. In terms of biological role, catalyzes the formation of acetyl phosphate from acetate and ATP. Can also catalyze the reverse reaction. In Porphyromonas gingivalis (strain ATCC 33277 / DSM 20709 / CIP 103683 / JCM 12257 / NCTC 11834 / 2561), this protein is Acetate kinase.